The sequence spans 489 residues: Glutamyl-tRNA(Gln) amidotransferase subunit A (489 aa).

Catalysis depends on charge relay system residues lysine 80 and serine 160. Serine 184 acts as the Acyl-ester intermediate in catalysis.

It belongs to the amidase family. GatA subfamily. In terms of assembly, heterotrimer of A, B and C subunits.

It catalyses the reaction L-glutamyl-tRNA(Gln) + L-glutamine + ATP + H2O = L-glutaminyl-tRNA(Gln) + L-glutamate + ADP + phosphate + H(+). In terms of biological role, allows the formation of correctly charged Gln-tRNA(Gln) through the transamidation of misacylated Glu-tRNA(Gln) in organisms which lack glutaminyl-tRNA synthetase. The reaction takes place in the presence of glutamine and ATP through an activated gamma-phospho-Glu-tRNA(Gln). The sequence is that of Glutamyl-tRNA(Gln) amidotransferase subunit A from Wolbachia sp. subsp. Brugia malayi (strain TRS).